The following is a 318-amino-acid chain: B3 domain-containing protein At1g05930 (318 aa).

Positions 201–293 (FNRLISNDFL…VLCFAMRQWR (93 aa)) form a DNA-binding region, TF-B3.

It is found in the nucleus. This Arabidopsis thaliana (Mouse-ear cress) protein is B3 domain-containing protein At1g05930.